The sequence spans 329 residues: Glycerol-3-phosphate dehydrogenase [NAD(P)+] (329 aa).

NADPH contacts are provided by S10, W11, R31, and K105. Sn-glycerol 3-phosphate-binding residues include K105, G134, and S136. A138 is a binding site for NADPH. The sn-glycerol 3-phosphate site is built by K189, D242, S252, R253, and N254. K189 serves as the catalytic Proton acceptor. R253 serves as a coordination point for NADPH. 2 residues coordinate NADPH: V277 and E279.

The protein belongs to the NAD-dependent glycerol-3-phosphate dehydrogenase family.

It is found in the cytoplasm. It catalyses the reaction sn-glycerol 3-phosphate + NAD(+) = dihydroxyacetone phosphate + NADH + H(+). The enzyme catalyses sn-glycerol 3-phosphate + NADP(+) = dihydroxyacetone phosphate + NADPH + H(+). The protein operates within membrane lipid metabolism; glycerophospholipid metabolism. In terms of biological role, catalyzes the reduction of the glycolytic intermediate dihydroxyacetone phosphate (DHAP) to sn-glycerol 3-phosphate (G3P), the key precursor for phospholipid synthesis. This chain is Glycerol-3-phosphate dehydrogenase [NAD(P)+], found in Neisseria meningitidis serogroup C (strain 053442).